Reading from the N-terminus, the 86-residue chain is Large ribosomal subunit protein bL27 (86 aa).

The tract at residues 1-20 is disordered; that stretch reads MAHKKAGGSSRNGRDSESKR.

The protein belongs to the bacterial ribosomal protein bL27 family.

The sequence is that of Large ribosomal subunit protein bL27 from Paraburkholderia phymatum (strain DSM 17167 / CIP 108236 / LMG 21445 / STM815) (Burkholderia phymatum).